A 553-amino-acid chain; its full sequence is Effector protein HopAB2 (553 aa).

Disordered stretches follow at residues 1 to 123, 198 to 227, and 239 to 275; these read MAGI…APRR, AVHQ…GSSQ, and APNQ…AAMR. Positions 1–308 are host recognition; Pto interaction; sequence MAGINRAGPS…LRTALERHVM (308 aa). Low complexity predominate over residues 24–39; that stretch reads SGQAHGSGSGASSSNS. A compositionally biased stretch (pro residues) spans 47 to 60; sequence SNTPPSNAPAPPPT. Over residues 217–227 the composition is skewed to low complexity; it reads SPAASSSGSSQ. Positions 242 to 255 are enriched in polar residues; it reads QGRSSNTAASQTPV. The tract at residues 309–553 is E3 ubiquitin-protein ligase; that stretch reads QRLPIPLDIG…IAKYAFRIVP (245 aa). The Interaction with Pto-kinase signature appears at 325–328; that stretch reads GINP. The disordered stretch occupies residues 361 to 380; the sequence is APRPAVPVAPATASRRPDGT. Residues 512-529 form a required for E3 ubiquitin-protein ligase and anti-PCD activities and pathogenesis region; sequence KDLAFMDMKKLAQFLAGK.

Belongs to the HopAB family. As to quaternary structure, interacts physically with plant cell Pto. In terms of processing, auto-ubiquitinated.

The protein resides in the secreted. Its function is as follows. Effector protein involved in gene-for-gene resistance in tomato plants. It is recognized by the host Pto resistance protein and elicits Pto and Prf-dependent hypersensitive response (HR) and programmed cell death (PCD), resulting in host immunity. In susceptible plants, acts as a virulence factor by suppressing PCD and HR-based plant immunity. This function requires its E3 ubiquitin ligase activity probably by recruiting E2 enzymes and transferring ubiquitin molecules to cellular proteins involved in regulation of PCD and targeting them for degradation. Also, induces expression of host genes involved in ethylene biosynthesis and signaling, in particular ACO1 and ACO2, encoding the ethylene-forming enzyme ACC oxidase. In Pseudomonas syringae pv. tomato (strain ATCC BAA-871 / DC3000), this protein is Effector protein HopAB2 (hopAB2).